Reading from the N-terminus, the 290-residue chain is Outer dense fiber protein 4 (290 aa).

Serine 28 is modified (phosphoserine). 4 helical membrane-spanning segments follow: residues 44-64 (AQVV…VMVF), 125-145 (PVFG…FVLT), 164-184 (LIGI…LLLF), and 201-221 (IGWS…CGIL). A disordered region spans residues 247–290 (GPESLVSPSQTPSSQENSQESPKDDQKPSSPDKVVSPPQPDTTG). Residues 252-266 (VSPSQTPSSQENSQE) are compositionally biased toward polar residues.

Expressed in testis.

The protein resides in the membrane. Functionally, component of the outer dense fibers (ODF) of spermatozoa which could be involved in sperm tail structure, sperm movement and general organization of cellular cytoskeleton. The polypeptide is Outer dense fiber protein 4 (Odf4) (Mus musculus (Mouse)).